The primary structure comprises 436 residues: 3-ketoacyl-CoA thiolase (436 aa).

Cys99 (acyl-thioester intermediate) is an active-site residue. Catalysis depends on proton acceptor residues His392 and Cys422.

The protein belongs to the thiolase-like superfamily. Thiolase family. Heterotetramer of two alpha chains (FadJ) and two beta chains (FadI).

Its subcellular location is the cytoplasm. It catalyses the reaction an acyl-CoA + acetyl-CoA = a 3-oxoacyl-CoA + CoA. Its pathway is lipid metabolism; fatty acid beta-oxidation. Functionally, catalyzes the final step of fatty acid oxidation in which acetyl-CoA is released and the CoA ester of a fatty acid two carbons shorter is formed. The protein is 3-ketoacyl-CoA thiolase of Shewanella halifaxensis (strain HAW-EB4).